Reading from the N-terminus, the 159-residue chain is Putative pre-16S rRNA nuclease (159 aa).

This sequence belongs to the YqgF nuclease family.

The protein localises to the cytoplasm. In terms of biological role, could be a nuclease involved in processing of the 5'-end of pre-16S rRNA. The polypeptide is Putative pre-16S rRNA nuclease (Bartonella henselae (strain ATCC 49882 / DSM 28221 / CCUG 30454 / Houston 1) (Rochalimaea henselae)).